The primary structure comprises 146 residues: Large ribosomal subunit protein uL15 (146 aa).

The segment at 1 to 56 (MKLHELRAAEGANKASKRVGRGTGSGLGKTSGRGQNGQNSRSGGGVRPGFEGGQMP) is disordered. Gly residues-rich tracts occupy residues 21–35 (RGTGSGLGKTSGRGQ) and 42–52 (SGGGVRPGFEG).

It belongs to the universal ribosomal protein uL15 family. In terms of assembly, part of the 50S ribosomal subunit.

Functionally, binds to the 23S rRNA. The chain is Large ribosomal subunit protein uL15 from Clostridium botulinum (strain Okra / Type B1).